Consider the following 213-residue polypeptide: MGREFIPLFEDWAATYDQTVQGLDIQYKEAFRGYDHILDAIVRKSGTHVLEFGPGTGNLTAKLLDAGKTVFGIEPSPAMRKLASDKLSGRTEIVDGDFLTFPEPPFQADTIVSSYAFHHLTDEEKRAAIKQYGKYLHLHDKIVFADTVFENAQAYQQAIDKARSQGFYQLANDLETEHYPTLDALKEMFTAEGFAVRFTQQNDFVWIMEAIKR.

The S-adenosyl-L-methionine site is built by G53, E74, and D97.

Belongs to the methyltransferase superfamily. YrrT family.

Functionally, could be a S-adenosyl-L-methionine-dependent methyltransferase. This is an uncharacterized protein from Bacillus subtilis (strain 168).